Reading from the N-terminus, the 204-residue chain is Elongation factor Ts (204 aa).

The tract at residues 80–83 (TDFV) is involved in Mg(2+) ion dislocation from EF-Tu.

The protein belongs to the EF-Ts family.

The protein resides in the cytoplasm. In terms of biological role, associates with the EF-Tu.GDP complex and induces the exchange of GDP to GTP. It remains bound to the aminoacyl-tRNA.EF-Tu.GTP complex up to the GTP hydrolysis stage on the ribosome. The chain is Elongation factor Ts from Thermoanaerobacter sp. (strain X514).